A 213-amino-acid polypeptide reads, in one-letter code: Pyridoxine/pyridoxamine 5'-phosphate oxidase (213 aa).

FMN is bound by residues 60-65, 75-76, K82, and Q104; these read RMVLMK and YS. K65 is a binding site for substrate. Substrate is bound by residues Y122 and R126. Residues 139-140 and W184 contribute to the FMN site; that span reads QS. A substrate-binding site is contributed by 190 to 192; that stretch reads RLH. FMN is bound at residue R194.

Belongs to the pyridoxamine 5'-phosphate oxidase family. Homodimer. Requires FMN as cofactor.

It catalyses the reaction pyridoxamine 5'-phosphate + O2 + H2O = pyridoxal 5'-phosphate + H2O2 + NH4(+). It carries out the reaction pyridoxine 5'-phosphate + O2 = pyridoxal 5'-phosphate + H2O2. It participates in cofactor metabolism; pyridoxal 5'-phosphate salvage; pyridoxal 5'-phosphate from pyridoxamine 5'-phosphate: step 1/1. It functions in the pathway cofactor metabolism; pyridoxal 5'-phosphate salvage; pyridoxal 5'-phosphate from pyridoxine 5'-phosphate: step 1/1. Functionally, catalyzes the oxidation of either pyridoxine 5'-phosphate (PNP) or pyridoxamine 5'-phosphate (PMP) into pyridoxal 5'-phosphate (PLP). This is Pyridoxine/pyridoxamine 5'-phosphate oxidase from Bradyrhizobium diazoefficiens (strain JCM 10833 / BCRC 13528 / IAM 13628 / NBRC 14792 / USDA 110).